We begin with the raw amino-acid sequence, 110 residues long: T cell receptor alpha variable 22 (110 aa).

The N-terminal stretch at 1 to 21 (MKRILGALLGLLSAQVCCVRG) is a signal peptide. The Ig-like domain maps to 22–110 (IQVEQSPPDL…DSGVYFCAVE (89 aa)). N-linked (GlcNAc...) asparagine glycosylation is found at Asn38 and Asn44. A disulfide bridge links Cys43 with Cys107.

As to quaternary structure, alpha-beta TR is a heterodimer composed of an alpha and beta chain; disulfide-linked. The alpha-beta TR is associated with the transmembrane signaling CD3 coreceptor proteins to form the TR-CD3 (TcR or TCR). The assembly of alpha-beta TR heterodimers with CD3 occurs in the endoplasmic reticulum where a single alpha-beta TR heterodimer associates with one CD3D-CD3E heterodimer, one CD3G-CD3E heterodimer and one CD247 homodimer forming a stable octameric structure. CD3D-CD3E and CD3G-CD3E heterodimers preferentially associate with TR alpha and TR beta chains, respectively. The association of the CD247 homodimer is the last step of TcR assembly in the endoplasmic reticulum and is required for transport to the cell surface.

Its subcellular location is the cell membrane. Its function is as follows. V region of the variable domain of T cell receptor (TR) alpha chain that participates in the antigen recognition. Alpha-beta T cell receptors are antigen specific receptors which are essential to the immune response and are present on the cell surface of T lymphocytes. Recognize peptide-major histocompatibility (MH) (pMH) complexes that are displayed by antigen presenting cells (APC), a prerequisite for efficient T cell adaptive immunity against pathogens. Binding of alpha-beta TR to pMH complex initiates TR-CD3 clustering on the cell surface and intracellular activation of LCK that phosphorylates the ITAM motifs of CD3G, CD3D, CD3E and CD247 enabling the recruitment of ZAP70. In turn ZAP70 phosphorylates LAT, which recruits numerous signaling molecules to form the LAT signalosome. The LAT signalosome propagates signal branching to three major signaling pathways, the calcium, the mitogen-activated protein kinase (MAPK) kinase and the nuclear factor NF-kappa-B (NF-kB) pathways, leading to the mobilization of transcription factors that are critical for gene expression and essential for T cell growth and differentiation. The T cell repertoire is generated in the thymus, by V-(D)-J rearrangement. This repertoire is then shaped by intrathymic selection events to generate a peripheral T cell pool of self-MH restricted, non-autoaggressive T cells. Post-thymic interaction of alpha-beta TR with the pMH complexes shapes TR structural and functional avidity. The chain is T cell receptor alpha variable 22 from Homo sapiens (Human).